The primary structure comprises 259 residues: Glutamate racemase (259 aa).

Residues Asp9–Ser10 and Tyr41–Gly42 each bind substrate. Catalysis depends on Cys73, which acts as the Proton donor/acceptor. Asn74–Thr75 contacts substrate. Cys183 serves as the catalytic Proton donor/acceptor. Thr184–His185 provides a ligand contact to substrate.

This sequence belongs to the aspartate/glutamate racemases family.

It carries out the reaction L-glutamate = D-glutamate. The protein operates within cell wall biogenesis; peptidoglycan biosynthesis. Functionally, provides the (R)-glutamate required for cell wall biosynthesis. The polypeptide is Glutamate racemase (Shewanella frigidimarina (strain NCIMB 400)).